A 231-amino-acid polypeptide reads, in one-letter code: Probable calcium-binding protein CML21 (231 aa).

EF-hand domains follow at residues 54 to 89 (DGLR…LEIS), 90 to 125 (FDEE…VYLL), 145 to 180 (PTFE…SGER), and 181 to 216 (SSGR…WVGI). Ca(2+) is bound by residues aspartate 67, aspartate 69, asparagine 71, serine 73, and glutamate 78. Ca(2+) contacts are provided by aspartate 158, asparagine 160, aspartate 162, tyrosine 164, glutamate 169, aspartate 194, aspartate 196, asparagine 198, methionine 200, and glutamate 205.

Functionally, potential calcium sensor. This Arabidopsis thaliana (Mouse-ear cress) protein is Probable calcium-binding protein CML21 (CML21).